The chain runs to 142 residues: Hemoglobin subunit alpha (142 aa).

The 141-residue stretch at 2–142 (VLSAADKTNV…VSTVLTSKYR (141 aa)) folds into the Globin domain. Ser4 is subject to Phosphoserine. An N6-succinyllysine modification is found at Lys8. Thr9 bears the Phosphothreonine mark. The residue at position 12 (Lys12) is an N6-succinyllysine. At Lys17 the chain carries N6-acetyllysine; alternate. Lys17 is modified (N6-succinyllysine; alternate). The residue at position 25 (Tyr25) is a Phosphotyrosine. The residue at position 41 (Lys41) is an N6-succinyllysine. Ser50 is subject to Phosphoserine. Residue His59 coordinates O2. Residue His88 participates in heme b binding. Ser103 carries the phosphoserine modification. Thr109 carries the post-translational modification Phosphothreonine. 2 positions are modified to phosphoserine: Ser125 and Ser132. Residues Thr135 and Thr138 each carry the phosphothreonine modification. Ser139 is subject to Phosphoserine.

Belongs to the globin family. In terms of assembly, heterotetramer of two alpha chains and two beta chains. In terms of tissue distribution, red blood cells.

Functionally, involved in oxygen transport from the lung to the various peripheral tissues. In terms of biological role, hemopressin acts as an antagonist peptide of the cannabinoid receptor CNR1. Hemopressin-binding efficiently blocks cannabinoid receptor CNR1 and subsequent signaling. The chain is Hemoglobin subunit alpha (HBA) from Equus caballus (Horse).